The primary structure comprises 91 residues: Ice-structuring protein (91 aa).

An N-terminal signal peptide occupies residues 1-21 (MALSLFTVGQLIFLFWTMRIT). Positions 22-39 (EANPDPAAKAVPAAAAPD) are cleaved as a propeptide — removed by a dipeptidylpeptidase.

It belongs to the type-I AFP family.

It localises to the secreted. In terms of biological role, contributes to protect fish blood from freezing at subzero sea water temperatures. Lowers the blood freezing point. Binds to nascent ice crystals and prevents further growth. This chain is Ice-structuring protein, found in Pseudopleuronectes americanus (Winter flounder).